Reading from the N-terminus, the 610-residue chain is Probable pleckstrin homology domain-containing family N member 1 (610 aa).

The disordered stretch occupies residues 1–30 (MGNSHCVPQAPRRLRASFSRKPSLKGNRED). The N-myristoyl glycine moiety is linked to residue glycine 2. The interaction with C1QBP stretch occupies residues 61-100 (TDIPGPEHHPENLEQPFLSVFKKGWRRTPVRNLGKVVHYS). PH domains follow at residues 96–192 (VVHY…MALL) and 227–324 (AICA…SRRD). Phosphotyrosine is present on tyrosine 307. Disordered regions lie at residues 327–357 (HLPPGPESFPGLQKPTQLVGRGRGSLSSNGR), 371–431 (QSLP…PLPL), 443–473 (LDSGPEAQDHSLDIPHSPLYADPYTPPATSR), and 493–610 (PGPD…IQWI). 2 stretches are compositionally biased toward polar residues: residues 371–380 (QSLPESSVPT) and 391–402 (NQTDSNCVSTGQ). At tyrosine 462 the chain carries Phosphotyrosine. Residues 504–526 (VSVSVPVSESSSGISSSPGPLGS) show a composition bias toward low complexity.

As to quaternary structure, found in a complex with cytochrome c mRNA and various ribosomal proteins. Interacts with C1QBP, ELAVL1 and BID. In terms of processing, phosphorylation is essential for its mitochondrial localization and regulates its interaction with C1QBP. In terms of tissue distribution, testis and adipose tissue (at protein level). Ubiquitous.

It is found in the cell membrane. Its subcellular location is the mitochondrion membrane. The protein localises to the mitochondrion. Its function is as follows. Controls the stability of the leptin mRNA harboring an AU-rich element (ARE) in its 3' UTR, in cooperation with the RNA stabilizer ELAVL1. Decreases the stability of the leptin mRNA by antagonizing the function of ELAVL1 by inducing its atypical recruitment from the nucleus to the cytosol. Binds to cardiolipin (CL), phosphatidic acid (PA), phosphatidylinositol 4-phosphate (PtdIns(4)P) and phosphatidylserine (PS). The polypeptide is Probable pleckstrin homology domain-containing family N member 1 (Plekhn1) (Mus musculus (Mouse)).